We begin with the raw amino-acid sequence, 1075 residues long: Disheveled-associated activator of morphogenesis 2 (1075 aa).

The 377-residue stretch at 40-416 (VPIPPTEELN…QIVLQDERGD (377 aa)) folds into the GBD/FH3 domain. A coiled-coil region spans residues 437–517 (NENEVKQWRD…VAQLNEYSQG (81 aa)). Disordered stretches follow at residues 517 to 611 (GGSI…IPQP), 1006 to 1025 (KEQR…SISE), and 1048 to 1075 (SKLK…KLNY). Over residues 523 to 532 (PAPPPPPPGG) the composition is skewed to pro residues. The span at 533 to 544 (PLALSSALSSAL) shows a compositional bias: low complexity. Residues 550–581 (PPLPPPLPFSSCPPPPAPPPPPGGPPPPPGAP) are compositionally biased toward pro residues. One can recognise an FH2 domain in the interval 605–1075 (KKSIPQPSHP…RERVVTKLNY (471 aa)). The DAD domain occupies 1025 to 1075 (EETGEFDDLVSALRSGEVFDKDLSKLKRNRKRSGNQGLETSRERVVTKLNY). The span at 1064 to 1075 (TSRERVVTKLNY) shows a compositional bias: basic and acidic residues.

The protein belongs to the formin homology family. Expressed in progenitor populations of the embryonic spinal cord (at protein level).

Key regulator of the Wnt signaling pathway, which is required for various processes during development, such as dorsal patterning, determination of left/right symmetry or myelination in the central nervous system. Acts downstream of Wnt ligands and upstream of beta-catenin (CTNNB1). Required for canonical Wnt signaling pathway during patterning in the dorsal spinal cord by promoting the aggregation of Disheveled (Dvl) complexes, thereby clustering and formation of Wnt receptor signalosomes and potentiating Wnt activity. During dorsal patterning of the spinal cord, inhibits oligodendrocytes differentiation via interaction with PIP5K1A. Also regulates non-canonical Wnt signaling pathway. Acts downstream of PITX2 in the developing gut and is required for left/right asymmetry within dorsal mesentery: affects mesenchymal condensation by lengthening cadherin-based junctions through WNT5A and non-canonical Wnt signaling, inducing polarized condensation in the left dorsal mesentery necessary to initiate gut rotation. Together with DAAM1, required for myocardial maturation and sarcomere assembly. The sequence is that of Disheveled-associated activator of morphogenesis 2 from Gallus gallus (Chicken).